The sequence spans 396 residues: Ornithine aminotransferase (396 aa).

An N6-(pyridoxal phosphate)lysine modification is found at K255.

It belongs to the class-III pyridoxal-phosphate-dependent aminotransferase family. OAT subfamily. Requires pyridoxal 5'-phosphate as cofactor.

Its subcellular location is the cytoplasm. It carries out the reaction a 2-oxocarboxylate + L-ornithine = L-glutamate 5-semialdehyde + an L-alpha-amino acid. The protein operates within amino-acid biosynthesis; L-proline biosynthesis; L-glutamate 5-semialdehyde from L-ornithine: step 1/1. Functionally, catalyzes the interconversion of ornithine to glutamate semialdehyde. The polypeptide is Ornithine aminotransferase (Staphylococcus carnosus (strain TM300)).